The chain runs to 127 residues: Fluoride-specific ion channel FluC (127 aa).

The next 4 membrane-spanning stretches (helical) occupy residues 3 to 23 (ALLLVGAGGAAGAVARYLLGV), 36 to 56 (GTFAANILGGFLMGLLAGGLA), 72 to 92 (VGALGGFTTFSAYSLEVALMI), and 101 to 121 (FAYSLGSVALAVAALFAGLLL). The Na(+) site is built by Gly-76 and Thr-79.

Belongs to the fluoride channel Fluc/FEX (TC 1.A.43) family.

The protein resides in the cell inner membrane. The catalysed reaction is fluoride(in) = fluoride(out). Its activity is regulated as follows. Na(+) is not transported, but it plays an essential structural role and its presence is essential for fluoride channel function. Functionally, fluoride-specific ion channel. Important for reducing fluoride concentration in the cell, thus reducing its toxicity. The chain is Fluoride-specific ion channel FluC from Phenylobacterium zucineum (strain HLK1).